The following is a 39-amino-acid chain: Natriuretic peptide HsNP-a (39 aa).

Positions 1-8 (SGSKTAKI) are excised as a propeptide. Cys-12 and Cys-28 are joined by a disulfide.

It belongs to the natriuretic peptide family. As to expression, expressed by the venom gland.

Its subcellular location is the secreted. Snake venom natriuretic peptide that targets both NPR1 and NPR2. Exhibits hypotensive and vasodepressor activities. The chain is Natriuretic peptide HsNP-a from Hoplocephalus stephensii (Stephens's banded snake).